Reading from the N-terminus, the 182-residue chain is MPVAAYIEERVKIPENVQVEINNNEVVVKSGGKELRRRFEHPKIVIKKEGDEIVIFCEYPRRKDKAMVGTIRAHINNMIKGVTEGFTYKLKIRYAHFPMKVSVKGNEVIIENFLGEKHPRRARIMEGVTVKISGEDVIVTGIDKEKVGQTAANIEQATRIKGRDPRVFQDGIYIVEKAGKAI.

It belongs to the universal ribosomal protein uL6 family. Part of the 50S ribosomal subunit.

This protein binds to the 23S rRNA, and is important in its secondary structure. It is located near the subunit interface in the base of the L7/L12 stalk, and near the tRNA binding site of the peptidyltransferase center. This is Large ribosomal subunit protein uL6 from Methanocaldococcus jannaschii (strain ATCC 43067 / DSM 2661 / JAL-1 / JCM 10045 / NBRC 100440) (Methanococcus jannaschii).